Here is a 200-residue protein sequence, read N- to C-terminus: Outer-membrane lipoprotein LolB (200 aa).

Positions 1 to 18 are cleaved as a signal peptide; the sequence is MRRGRLLIAGLAALVLSA. Residue Cys19 is the site of N-palmitoyl cysteine attachment. Cys19 carries the S-diacylglycerol cysteine lipid modification.

This sequence belongs to the LolB family. In terms of assembly, monomer.

Its subcellular location is the cell outer membrane. In terms of biological role, plays a critical role in the incorporation of lipoproteins in the outer membrane after they are released by the LolA protein. This is Outer-membrane lipoprotein LolB from Alkalilimnicola ehrlichii (strain ATCC BAA-1101 / DSM 17681 / MLHE-1).